A 211-amino-acid chain; its full sequence is FMN-dependent NADH:quinone oxidoreductase (211 aa).

FMN is bound by residues 17 to 19 (SYS) and 102 to 105 (MWNF).

Belongs to the azoreductase type 1 family. In terms of assembly, homodimer. The cofactor is FMN.

The catalysed reaction is 2 a quinone + NADH + H(+) = 2 a 1,4-benzosemiquinone + NAD(+). It carries out the reaction N,N-dimethyl-1,4-phenylenediamine + anthranilate + 2 NAD(+) = 2-(4-dimethylaminophenyl)diazenylbenzoate + 2 NADH + 2 H(+). Its function is as follows. Quinone reductase that provides resistance to thiol-specific stress caused by electrophilic quinones. Also exhibits azoreductase activity. Catalyzes the reductive cleavage of the azo bond in aromatic azo compounds to the corresponding amines. This chain is FMN-dependent NADH:quinone oxidoreductase, found in Geobacillus kaustophilus (strain HTA426).